Consider the following 191-residue polypeptide: Fe/S biogenesis protein NfuA (191 aa).

The [4Fe-4S] cluster site is built by Cys-149 and Cys-152.

Belongs to the NfuA family. Homodimer. It depends on [4Fe-4S] cluster as a cofactor.

Involved in iron-sulfur cluster biogenesis. Binds a 4Fe-4S cluster, can transfer this cluster to apoproteins, and thereby intervenes in the maturation of Fe/S proteins. Could also act as a scaffold/chaperone for damaged Fe/S proteins. This chain is Fe/S biogenesis protein NfuA, found in Yersinia pseudotuberculosis serotype O:1b (strain IP 31758).